Here is a 286-residue protein sequence, read N- to C-terminus: 33 kDa chaperonin (286 aa).

2 disulfides stabilise this stretch: Cys225–Cys227 and Cys258–Cys261.

The protein belongs to the HSP33 family. In terms of processing, under oxidizing conditions two disulfide bonds are formed involving the reactive cysteines. Under reducing conditions zinc is bound to the reactive cysteines and the protein is inactive.

Its subcellular location is the cytoplasm. In terms of biological role, redox regulated molecular chaperone. Protects both thermally unfolding and oxidatively damaged proteins from irreversible aggregation. Plays an important role in the bacterial defense system toward oxidative stress. In Shewanella putrefaciens (strain CN-32 / ATCC BAA-453), this protein is 33 kDa chaperonin.